A 425-amino-acid polypeptide reads, in one-letter code: Serine hydroxymethyltransferase (425 aa).

Residues leucine 122 and 126–128 (GHL) each bind (6S)-5,6,7,8-tetrahydrofolate. The residue at position 231 (lysine 231) is an N6-(pyridoxal phosphate)lysine. Residue 355 to 357 (SPF) coordinates (6S)-5,6,7,8-tetrahydrofolate.

The protein belongs to the SHMT family. In terms of assembly, homodimer. Requires pyridoxal 5'-phosphate as cofactor.

The protein resides in the cytoplasm. It catalyses the reaction (6R)-5,10-methylene-5,6,7,8-tetrahydrofolate + glycine + H2O = (6S)-5,6,7,8-tetrahydrofolate + L-serine. It participates in one-carbon metabolism; tetrahydrofolate interconversion. It functions in the pathway amino-acid biosynthesis; glycine biosynthesis; glycine from L-serine: step 1/1. Functionally, catalyzes the reversible interconversion of serine and glycine with tetrahydrofolate (THF) serving as the one-carbon carrier. This reaction serves as the major source of one-carbon groups required for the biosynthesis of purines, thymidylate, methionine, and other important biomolecules. Also exhibits THF-independent aldolase activity toward beta-hydroxyamino acids, producing glycine and aldehydes, via a retro-aldol mechanism. This chain is Serine hydroxymethyltransferase, found in Rippkaea orientalis (strain PCC 8801 / RF-1) (Cyanothece sp. (strain PCC 8801)).